A 343-amino-acid polypeptide reads, in one-letter code: Peroxisome assembly protein 12 (343 aa).

The Peroxisomal matrix segment spans residues 1–5 (MDSPS). Residues 6–33 (LLEVLQVQQVEKLISPSLRFILAYFTHR) form a helical membrane-spanning segment. The Cytoplasmic portion of the chain corresponds to 34–37 (YPRF). Residues 38–62 (LLRAYNSFDGIYLLVKLLLEKSQLK) traverse the membrane as a helical segment. Residues 63–102 (KWNATSVERRFQLKRVIAVRDSSIIAEEFPQESESATSLN) are Peroxisomal matrix-facing. A helical membrane pass occupies residues 103–140 (GIDVLKKLFLTYCIPYLLEKCESLTTVKENHTAVSILS). The Cytoplasmic segment spans residues 141 to 146 (LQARDK). The helical transmembrane segment at 147–193 (QKGALSVFYSKIKILLVRLKKILHFVFRLIRKSNTYLQWLYYLLYAL) threads the bilayer. Over 194–238 (GKTPYTNLADHILRQRVIYNVENIHSRKLISTREKSSLLTSIADH) the chain is Peroxisomal matrix. Residues 239–266 (SMEGFLIIIQLIDWWQSNNYESHLKKGE) form a helical membrane-spanning segment. Residues 267 to 343 (VAFTELAPPK…KGESFWRLMI (77 aa)) are Cytoplasmic-facing. Zn(2+) is bound by residues Cys-289, Cys-292, Cys-309, and Cys-312. The RING-type; degenerate zinc-finger motif lies at 289–328 (CKICGEKIKNPAVLSTGFVFCYPCIQVWLQRHPFKCPVTN).

It belongs to the pex2/pex10/pex12 family. In terms of assembly, component of the PEX2-PEX10-PEX12 retrotranslocation channel, composed of PEX2, PEX10 and PEX12.

It localises to the peroxisome membrane. It participates in protein modification; protein ubiquitination. Its function is as follows. Component of a retrotranslocation channel required for peroxisome organization by mediating export of the PEX5 receptor from peroxisomes to the cytosol, thereby promoting PEX5 recycling. The retrotranslocation channel is composed of PEX2, PEX10 and PEX12; each subunit contributing transmembrane segments that coassemble into an open channel that specifically allows the passage of PEX5 through the peroxisomal membrane. PEX12 also regulates PEX5 recycling by activating the E3 ubiquitin-protein ligase activity of PEX10. When PEX5 recycling is compromised, PEX12 stimulates PEX10-mediated polyubiquitination of PEX5, leading to its subsequent degradation. The sequence is that of Peroxisome assembly protein 12 (pex12) from Schizosaccharomyces pombe (strain 972 / ATCC 24843) (Fission yeast).